Here is a 652-residue protein sequence, read N- to C-terminus: Fimbrin-4 (652 aa).

Calponin-homology (CH) domains follow at residues 116–233 (ESEK…KIQL), 261–364 (LAPE…HHRN), 388–494 (SREE…RYTM), and 509–617 (DITE…NWSL). Actin-binding regions lie at residues 116 to 364 (ESEK…HHRN) and 388 to 617 (SREE…NWSL). The interval 623-652 (TESTVSDDTDVSSVTEEISNLSTDDGSSDV) is disordered. Over residues 640-652 (ISNLSTDDGSSDV) the composition is skewed to polar residues.

In terms of assembly, interacts with F-actin.

The protein localises to the cytoplasm. The protein resides in the cytoskeleton. Its function is as follows. Cross-links actin filaments (F-actin). Stabilizes and prevents F-actin depolymerization mediated by profilin. May regulate actin cytoarchitecture, cell cycle, cell division, cell elongation and cytoplasmic tractus. This is Fimbrin-4 from Arabidopsis thaliana (Mouse-ear cress).